The following is a 329-amino-acid chain: Replication factor C small subunit 1 (329 aa).

44 to 51 (GPPGTGKT) contributes to the ATP binding site.

Belongs to the activator 1 small subunits family. RfcS subfamily. In terms of assembly, heteromultimer composed of small subunits (RfcS) and large subunits (RfcL).

Functionally, part of the RFC clamp loader complex which loads the PCNA sliding clamp onto DNA. This is Replication factor C small subunit 1 from Pyrobaculum aerophilum (strain ATCC 51768 / DSM 7523 / JCM 9630 / CIP 104966 / NBRC 100827 / IM2).